Consider the following 485-residue polypeptide: MKFLQIIPVLLSLTSTTLAQSFCSSASHSGQSVKETGNKVGTIGGVGYELWADSGNNSATFYSDGSFSCTFQNAGDYLCRSGLSFDSTKTPSQIGRMKADFKLVKQNISNVGYSYVGVYGWTRSPLVEYYIVDNWLSPSPPGDWVGNKKHGSFTIDGAQYTVYENTRTGPSIDGNTTFKQYFSIRQQARDCGTIDISAHFDQWEKLGMTMGKLHEAKVLGEAGNGNGGVSGTADFPYAKVYIGDGNGGGASPAPAGGAPAGGAPAGNDQPQGPQGQQPPQGQQPPQGQQPPQGQQPPQGQQPPQGNDQQGQQPPQGQQPPQGNDQHQGQHPPQPQGPQGGNPGGSDFNNWSQGGSPWGGNQGGSPWGGNQGGNPWGGNQGGSPWGGNQGGSPWGQGNQGGNPWGGNQGGSPWGGNQGGNPWGGNQWGAPQNAAAPQSAAAPQNASDGGNCASLWGQCGGQGYNGPSCCSEGSCKPINEYFHQCQK.

Positions 1 to 19 (MKFLQIIPVLLSLTSTTLA) are cleaved as a signal peptide. Residues 34–234 (KETGNKVGTI…GNGGVSGTAD (201 aa)) form the GH11 domain. N-linked (GlcNAc...) asparagine glycosylation is found at Asn56 and Asn107. Catalysis depends on Glu128, which acts as the Nucleophile. An N-linked (GlcNAc...) asparagine glycan is attached at Asn175. Residue Glu221 is the Proton donor of the active site. A disordered region spans residues 250-450 (ASPAPAGGAP…PQNASDGGNC (201 aa)). Low complexity-rich tracts occupy residues 265-330 (AGND…QGQH) and 344-354 (GSDFNNWSQGG). A run of 7 repeats spans residues 275-280 (GQQPPQ), 281-286 (GQQPPQ), 287-292 (GQQPPQ), 293-298 (GQQPPQ), 299-304 (GQQPPQ), 310-315 (GQQPPQ), and 316-321 (GQQPPQ). Positions 275 to 321 (GQQPPQGQQPPQGQQPPQGQQPPQGQQPPQGNDQQGQQPPQGQQPPQ) are 7 X 6 AA tandem repeats of G-Q-Q-P-P-Q. Asn349 carries N-linked (GlcNAc...) asparagine glycosylation. A run of 8 repeats spans residues 353-361 (GGSPWGGNQ), 362-370 (GGSPWGGNQ), 371-379 (GGNPWGGNQ), 380-388 (GGSPWGGNQ), 389-397 (GGSPWGQGN), 399-407 (GGNPWGGNQ), 408-416 (GGSPWGGNQ), and 417-425 (GGNPWGGNQ). The segment at 353 to 425 (GGSPWGGNQG…QGGNPWGGNQ (73 aa)) is 8 X 9 AA tandem repeats of G-G-[SN]-P-W-G-G-N-Q. Gly residues predominate over residues 355–425 (SPWGGNQGGS…QGGNPWGGNQ (71 aa)). The segment covering 426–445 (WGAPQNAAAPQSAAAPQNAS) has biased composition (low complexity). Residue Asn443 is glycosylated (N-linked (GlcNAc...) asparagine). The CBM1 domain maps to 449–484 (NCASLWGQCGGQGYNGPSCCSEGSCKPINEYFHQCQ).

This sequence belongs to the glycosyl hydrolase 11 (cellulase G) family.

The protein localises to the secreted. The catalysed reaction is Endohydrolysis of (1-&gt;4)-beta-D-xylosidic linkages in xylans.. It participates in glycan degradation; xylan degradation. Its function is as follows. Endo-1,4-beta-xylanase involved in the hydrolysis of xylan, a major structural heterogeneous polysaccharide found in plant biomass representing the second most abundant polysaccharide in the biosphere, after cellulose. This chain is Endo-1,4-beta-xylanase C (xynC), found in Neocallimastix patriciarum (Rumen fungus).